Reading from the N-terminus, the 242-residue chain is Purine nucleoside phosphorylase PA4543 (242 aa).

Zn(2+) contacts are provided by His69, Cys103, and His120.

This sequence belongs to the purine nucleoside phosphorylase YfiH/LACC1 family. As to quaternary structure, homodimer. Requires Cu(2+) as cofactor. Zn(2+) serves as cofactor.

It carries out the reaction adenosine + phosphate = alpha-D-ribose 1-phosphate + adenine. It catalyses the reaction S-methyl-5'-thioadenosine + phosphate = 5-(methylsulfanyl)-alpha-D-ribose 1-phosphate + adenine. The catalysed reaction is inosine + phosphate = alpha-D-ribose 1-phosphate + hypoxanthine. The enzyme catalyses adenosine + H2O + H(+) = inosine + NH4(+). Functionally, purine nucleoside enzyme that catalyzes the phosphorolysis of adenosine and inosine nucleosides, yielding D-ribose 1-phosphate and the respective free bases, adenine and hypoxanthine. Also catalyzes the phosphorolysis of S-methyl-5'-thioadenosine into adenine and S-methyl-5-thio-alpha-D-ribose 1-phosphate. Also has adenosine deaminase activity. The protein is Purine nucleoside phosphorylase PA4543 of Pseudomonas aeruginosa (strain ATCC 15692 / DSM 22644 / CIP 104116 / JCM 14847 / LMG 12228 / 1C / PRS 101 / PAO1).